The primary structure comprises 195 residues: ATP-dependent Clp protease proteolytic subunit 2 (195 aa).

The active-site Nucleophile is the serine 98. Histidine 123 is a catalytic residue.

Belongs to the peptidase S14 family. Fourteen ClpP subunits assemble into 2 heptameric rings which stack back to back to give a disk-like structure with a central cavity, resembling the structure of eukaryotic proteasomes.

It localises to the cytoplasm. The enzyme catalyses Hydrolysis of proteins to small peptides in the presence of ATP and magnesium. alpha-casein is the usual test substrate. In the absence of ATP, only oligopeptides shorter than five residues are hydrolyzed (such as succinyl-Leu-Tyr-|-NHMec, and Leu-Tyr-Leu-|-Tyr-Trp, in which cleavage of the -Tyr-|-Leu- and -Tyr-|-Trp bonds also occurs).. In terms of biological role, cleaves peptides in various proteins in a process that requires ATP hydrolysis. Has a chymotrypsin-like activity. Plays a major role in the degradation of misfolded proteins. ClpXP2 is involved in the complete degradation of the Site-2 clipped anti-sigma-W factor RsiW. This results in the release of SigW and the transcription activation of the genes under the control of the sigma-W factor. This is ATP-dependent Clp protease proteolytic subunit 2 from Shouchella clausii (strain KSM-K16) (Alkalihalobacillus clausii).